The primary structure comprises 366 residues: Putative [LysW]-aminoadipate semialdehyde/glutamate semialdehyde transaminase (366 aa).

Pyridoxal 5'-phosphate-binding positions include 90–91 and Phe-117; that span reads GT. Arg-120 contributes to the substrate binding site. 202–205 contributes to the pyridoxal 5'-phosphate binding site; the sequence is DEVQ. At Lys-230 the chain carries N6-(pyridoxal phosphate)lysine. Ser-254 is a substrate binding site. Thr-255 is a pyridoxal 5'-phosphate binding site.

This sequence belongs to the class-III pyridoxal-phosphate-dependent aminotransferase family. LysJ subfamily. Homodimer. The cofactor is pyridoxal 5'-phosphate.

It localises to the cytoplasm. It carries out the reaction [amino-group carrier protein]-C-terminal-gamma-(L-lysyl)-L-glutamate + 2-oxoglutarate = [amino-group carrier protein]-C-terminal-N-(1-carboxy-5-oxopentan-1-yl)-L-glutamine + L-glutamate. The enzyme catalyses [amino-group carrier protein]-C-terminal-gamma-(L-ornithyl)-L-glutamate + 2-oxoglutarate = [amino-group carrier protein]-C-terminal-gamma-(L-glutamyl-5-semialdehyde)-L-glutamate + L-glutamate. Its pathway is amino-acid biosynthesis; L-lysine biosynthesis via AAA pathway; L-lysine from L-alpha-aminoadipate (Thermus route): step 4/5. It functions in the pathway amino-acid biosynthesis; L-arginine biosynthesis. Its function is as follows. Involved in both the arginine and lysine biosynthetic pathways. This Pyrococcus horikoshii (strain ATCC 700860 / DSM 12428 / JCM 9974 / NBRC 100139 / OT-3) protein is Putative [LysW]-aminoadipate semialdehyde/glutamate semialdehyde transaminase.